We begin with the raw amino-acid sequence, 362 residues long: Phosphoserine aminotransferase (362 aa).

L-glutamate is bound by residues S9 and R42. Residues 76 to 77 (GR), W102, T153, D174, and Q197 each bind pyridoxal 5'-phosphate. K198 is modified (N6-(pyridoxal phosphate)lysine). 239-240 (NT) contributes to the pyridoxal 5'-phosphate binding site.

The protein belongs to the class-V pyridoxal-phosphate-dependent aminotransferase family. SerC subfamily. In terms of assembly, homodimer. Pyridoxal 5'-phosphate is required as a cofactor.

Its subcellular location is the cytoplasm. It catalyses the reaction O-phospho-L-serine + 2-oxoglutarate = 3-phosphooxypyruvate + L-glutamate. The catalysed reaction is 4-(phosphooxy)-L-threonine + 2-oxoglutarate = (R)-3-hydroxy-2-oxo-4-phosphooxybutanoate + L-glutamate. The protein operates within amino-acid biosynthesis; L-serine biosynthesis; L-serine from 3-phospho-D-glycerate: step 2/3. It participates in cofactor biosynthesis; pyridoxine 5'-phosphate biosynthesis; pyridoxine 5'-phosphate from D-erythrose 4-phosphate: step 3/5. Functionally, catalyzes the reversible conversion of 3-phosphohydroxypyruvate to phosphoserine and of 3-hydroxy-2-oxo-4-phosphonooxybutanoate to phosphohydroxythreonine. In Escherichia coli O7:K1 (strain IAI39 / ExPEC), this protein is Phosphoserine aminotransferase.